Here is an 80-residue protein sequence, read N- to C-terminus: Sulfur carrier protein TusA (80 aa).

C17 (cysteine persulfide intermediate) is an active-site residue.

The protein belongs to the sulfur carrier protein TusA family.

Its subcellular location is the cytoplasm. Sulfur carrier protein which probably makes part of a sulfur-relay system. The chain is Sulfur carrier protein TusA from Pseudomonas putida (strain ATCC 47054 / DSM 6125 / CFBP 8728 / NCIMB 11950 / KT2440).